The sequence spans 1071 residues: Fused isobutyryl-CoA mutase (1071 aa).

The B12-binding domain occupies 12-149 (PVRFVTSAAL…QTCDVDLTGE (138 aa)). His-25 provides a ligand contact to adenosylcob(III)alamin. Residues 153–400 (VEAVLAGERT…YQHLLELLGA (248 aa)) are GTPase chaperone MeaI. Position 203 to 208 (203 to 208 (GSGKSS)) interacts with GTP. Residues Ser-207, Val-232, Asp-233, and Asp-246 each contribute to the Mg(2+) site. Arg-249 is a binding site for GTP. 2 residues coordinate Mg(2+): Glu-293 and Thr-294. 340–343 (NKFE) is a binding site for GTP. Residues 401–558 (RGLPVDEGVL…RSENLPGHFP (158 aa)) are linker. The substrate site is built by Phe-566, Arg-601, Arg-707, Tyr-751, Ser-800, Arg-835, and Lys-840. Residues Glu-952 and Asn-1070 each contribute to the GTP site.

It belongs to the IcmF family. Homodimer. The cofactor is adenosylcob(III)alamin. Requires Mg(2+) as cofactor.

The catalysed reaction is 2-methylpropanoyl-CoA = butanoyl-CoA. It carries out the reaction GTP + H2O = GDP + phosphate + H(+). In terms of biological role, catalyzes the reversible interconversion of isobutyryl-CoA and n-butyryl-CoA, using radical chemistry. Also exhibits GTPase activity, associated with its G-protein domain (MeaI) that functions as a chaperone that assists cofactor delivery and proper holo-enzyme assembly. Does not exhibit methylmalonyl-CoA mutase (MCM) activity. This is Fused isobutyryl-CoA mutase from Nocardia farcinica (strain IFM 10152).